A 151-amino-acid chain; its full sequence is Protein NrdI (151 aa).

This sequence belongs to the NrdI family.

In terms of biological role, probably involved in ribonucleotide reductase function. The chain is Protein NrdI from Mycoplasmopsis pulmonis (strain UAB CTIP) (Mycoplasma pulmonis).